The primary structure comprises 550 residues: Methionine--tRNA ligase (550 aa).

Positions 14–24 (PYANGSLHIGH) match the 'HIGH' region motif. Zn(2+) contacts are provided by Cys145, Cys148, Cys158, and Cys161. The short motif at 331 to 335 (KMSKS) is the 'KMSKS' region element. Lys334 lines the ATP pocket.

This sequence belongs to the class-I aminoacyl-tRNA synthetase family. MetG type 1 subfamily. Monomer. It depends on Zn(2+) as a cofactor.

It localises to the cytoplasm. It carries out the reaction tRNA(Met) + L-methionine + ATP = L-methionyl-tRNA(Met) + AMP + diphosphate. Functionally, is required not only for elongation of protein synthesis but also for the initiation of all mRNA translation through initiator tRNA(fMet) aminoacylation. The chain is Methionine--tRNA ligase from Wigglesworthia glossinidia brevipalpis.